The sequence spans 158 residues: MTITDLVLILFIAALLAFAIYDQFIMPRRNGPTLLAIPLLRRGRIDSVIFVGLIVILIYNNVTNHGALITTWLLSALALMGFYIFWIRIPKIIFKQKGFFFANVWIEYSRIKAMNLSEDGVLVMQLEQRRLLIRVRNIDDLEKIYKLLVSGNAANLLI.

3 consecutive transmembrane segments (helical) span residues 6 to 26 (LVLILFIAALLAFAIYDQFIM), 45 to 65 (IDSVIFVGLIVILIYNNVTNH), and 67 to 87 (ALITTWLLSALALMGFYIFWI).

The protein belongs to the UPF0266 family.

The protein localises to the cell inner membrane. This is UPF0266 membrane protein YobD from Shigella boydii serotype 4 (strain Sb227).